The sequence spans 483 residues: GDP-fucose protein O-fucosyltransferase 3 (483 aa).

The Cytoplasmic segment spans residues Met-1–Lys-8. The helical; Signal-anchor for type II membrane protein transmembrane segment at Leu-9–Glu-31 threads the bilayer. Residues Leu-32–Phe-483 lie on the Lumenal side of the membrane. Positions Leu-45–Lys-64 are disordered. Residues Asn-110, Asn-168, and Asn-318 are each glycosylated (N-linked (GlcNAc...) asparagine). Cysteines 389 and 392 form a disulfide. A glycan (N-linked (GlcNAc...) asparagine) is linked at Asn-468.

It belongs to the glycosyltransferase 10 family.

It is found in the endoplasmic reticulum membrane. It catalyses the reaction L-threonyl-[protein] + GDP-beta-L-fucose = 3-O-(alpha-L-fucosyl)-L-threonyl-[protein] + GDP + H(+). The enzyme catalyses L-seryl-[protein] + GDP-beta-L-fucose = 3-O-(alpha-L-fucosyl)-L-seryl-[protein] + GDP + H(+). The protein operates within protein modification; protein glycosylation. Protein O-fucosyltransferase that specifically catalyzes O-fucosylation of serine or threonine residues in EMI domains of target proteins, such as MMRN1, MMRN2 and EMID1. Attaches fucose through an O-glycosidic linkage. O-fucosylation of EMI domain-containing proteins may be required for facilitating protein folding and secretion. May also show alpha-(1,3)-fucosyltransferase activity toward the innermost N-acetyl glucosamine (GlcNAc) residue in biantennary N-glycan acceptors. However, this was tested with a library of synthetic substrates and this activity is unsure in vivo. May be involved in biosynthesis of Lewis X-carrying biantennary N-glycans that regulate neuron stem cell self-renewal during brain development. In Rattus norvegicus (Rat), this protein is GDP-fucose protein O-fucosyltransferase 3 (Fut10).